The following is a 366-amino-acid chain: Phenylalanine dehydrogenase (366 aa).

Arginine 45 lines the NAD(+) pocket. Residue lysine 69 participates in L-phenylalanine binding. The active site involves lysine 81. NAD(+) is bound by residues aspartate 116, threonine 151, 181–187 (GVGKVGE), 204–205 (DI), 241–242 (AK), and 262–264 (SAN). An L-phenylalanine-binding site is contributed by asparagine 264.

The protein belongs to the Glu/Leu/Phe/Val dehydrogenases family.

It catalyses the reaction L-phenylalanine + NAD(+) + H2O = 3-phenylpyruvate + NH4(+) + NADH + H(+). Its pathway is amino-acid biosynthesis; L-phenylalanine biosynthesis; L-phenylalanine from phenylpyruvate (PDH route): step 1/1. Functionally, catalyzes the reversible NAD(+)-dependent oxidative deamination of L-phenylalanine to phenylpyruvate. The sequence is that of Phenylalanine dehydrogenase from Thermoactinomyces intermedius.